The sequence spans 350 residues: MLRQIKPRNARSKRALEKRAPKIVENPKTCLFLRGTTCSQITQDAMNDLYAMRQVHAKRFHKKNAIHPFEDATSLCFFSEKNDCSLMVFGSSNKKRPHTLTFVRMFDYKVLDMLEFYLDPDTYRSISQFKTSKIPIGMRPMMVFAGTAFESPVPNAFTMAKSMLIDFFRGEPSDKIDVEGLRFVVVVTADEPTSSTSTNNDGENPAPLPGMTDPRSIDPSQKPILRLRVYGIRTKRSGTRLPRVEVEEHGPRMDFRLGRMREPDPAMLKEAMKKAKTPQEERTKKNISMDLLGDKIGRIHMGKTDLSKLQTRKMKGLKRGRDEDEGGEDDRTDVVEAGSGEKKKKKKVKG.

In terms of domain architecture, Brix spans 28-266 (KTCLFLRGTT…LGRMREPDPA (239 aa)). A compositionally biased stretch (polar residues) spans 192-202 (PTSSTSTNNDG). Disordered regions lie at residues 192–219 (PTSS…SIDP) and 301–350 (MGKT…KVKG).

It belongs to the RPF2 family. Component of a hexameric 5S RNP precursor complex, composed of 5S RNA, RRS1, RPF2, RPL5, RPL11 and SYO1; this complex acts as a precursor for ribosome assembly.

Its subcellular location is the nucleus. It localises to the nucleolus. In terms of biological role, involved in ribosomal large subunit assembly. This chain is Ribosome production factor 2 homolog, found in Chaetomium thermophilum (strain DSM 1495 / CBS 144.50 / IMI 039719) (Thermochaetoides thermophila).